The sequence spans 2190 residues: Voltage-dependent L-type calcium channel subunit alpha-1D (2190 aa).

The segment covering 1-10 (MQHHQQQQPE) has biased composition (low complexity). 2 disordered regions span residues 1-44 (MQHH…SKQT) and 57-96 (QAKA…SNSR). Residues 1 to 121 (MQHHQQQQPE…RACISLVEWK (121 aa)) are Cytoplasmic-facing. 2 stretches are compositionally biased toward polar residues: residues 31-44 (PTTQ…SKQT) and 63-76 (NMNT…GSLS). Basic residues predominate over residues 77 to 88 (QRKRQQYAKSKK). One copy of the I repeat lies at 108–404 (NPIRRACISL…LVLGVLSGEF (297 aa)). Residues 122-140 (PFDIFILLSIFANCVALAV) form a helical membrane-spanning segment. Residues 141–158 (YIPFPEDDSNSTNHNLEK) are Extracellular-facing. Asn-150 carries N-linked (GlcNAc...) asparagine glycosylation. Residues 159 to 178 (VEYAFLIIFTVETFLKIIAY) form a helical membrane-spanning segment. Residues 179–190 (GLLLHPNAYVRN) lie on the Cytoplasmic side of the membrane. Residues 191 to 209 (GWNLLDFVIVVVGLFSVIL) traverse the membrane as a helical segment. Topologically, residues 210-230 (EQLTKETEGGSHSGGKPGGFD) are extracellular. Residues 231–249 (VKALRAFRVLRPLRLVSGV) traverse the membrane as a helical segment. The Cytoplasmic portion of the chain corresponds to 250 to 268 (PSLQVVLNSIIKAMVPLLH). A helical transmembrane segment spans residues 269–288 (IALLVLFVIIIYAIIGLELF). Over 289–376 (IGKMHKSCFL…WVNDAIGCEW (88 aa)) the chain is Extracellular. N-linked (GlcNAc...) asparagine glycosylation is present at Asn-324. Glu-359 serves as a coordination point for Ca(2+). A helical membrane pass occupies residues 377-401 (PWIYFVSLIILGSFFVLNLVLGVLS). Residues 402–544 (GEFSKEREKA…RKCRAAVKSV (143 aa)) are Cytoplasmic-facing. The tract at residues 424 to 441 (QQLEEDLKGYLDWITQAE) is binding to the beta subunit. The segment at 478-500 (GRSSNKHASMPTSETESVNTENV) is disordered. An II repeat occupies 530-776 (NRFNRRKCRA…VFLAIAVDNL (247 aa)). A helical transmembrane segment spans residues 545-564 (TFYWLVIVLVFLNTLTISSE). The Extracellular portion of the chain corresponds to 565–579 (HYNQPDWLTQIQDIA). A helical membrane pass occupies residues 580–598 (NKVLLALFTCEMLVKMYSL). The Cytoplasmic portion of the chain corresponds to 599–606 (GLQAYFVS). Residues 607 to 625 (LFNRFDCFVVCGGIVETIL) form a helical membrane-spanning segment. At 626 to 635 (VELEIMSPLG) the chain is on the extracellular side. The helical transmembrane segment at 636 to 654 (ISVFRCVRLLRIFKVTRHW) threads the bilayer. Residues 655–673 (ASLSNLVASLLNSMKSIAS) are Cytoplasmic-facing. A helical transmembrane segment spans residues 674–694 (LLLLLFLFIIIFSLLGMQLFG). Over 695–748 (GKFNFDETQTKRSTFDNFPQALLTVFQILTGEDWNAVMYDGIMAYGGPSSSGMI) the chain is Extracellular. Residue Glu-726 coordinates Ca(2+). A helical transmembrane segment spans residues 749–773 (VCIYFIILFICGNYILLNVFLAIAV). Residues 774–907 (DNLADAESLN…VGCHRLINHH (134 aa)) lie on the Cytoplasmic side of the membrane. The segment covering 787 to 823 (KEEAEEKERKKNARKESLENKKSEKSEGDQKKPKDSK) has biased composition (basic and acidic residues). Residues 787 to 869 (KEEAEEKERK…VPAGPRPRRI (83 aa)) are disordered. A compositionally biased stretch (acidic residues) spans 847–859 (VGEDEEDEEDEPE). One copy of the III repeat lies at 894–1176 (NPIRVGCHRL…IFVGFVIVTF (283 aa)). Residues 908–926 (IFTNLILVFIMLSSVSLAA) traverse the membrane as a helical segment. Residues 927–942 (EDPIRSHSFRNNILGY) lie on the Extracellular side of the membrane. The helical transmembrane segment at 943–962 (ADYVFTSMFTFEIILKMTAF) threads the bilayer. The Cytoplasmic portion of the chain corresponds to 963-974 (GAFLHKGSFCRN). A helical membrane pass occupies residues 975 to 993 (YFNLLDLLVVGVSLVSFGI). At 994–999 (QSSAIS) the chain is on the extracellular side. Residues 1000–1019 (VVKILRVLRVLRPLRAINRA) traverse the membrane as a helical segment. The Cytoplasmic segment spans residues 1020–1038 (KGLKHVVQCVFVAIRTIGN). The helical transmembrane segment at 1039–1058 (IMIVTTLLQFMFACIGVQLF) threads the bilayer. The Extracellular portion of the chain corresponds to 1059 to 1148 (KGKFYKCTDE…VGPVYNYRVE (90 aa)). The dihydropyridine binding stretch occupies residues 1096 to 1186 (RVWQNSDFNF…QEQGEQEYKN (91 aa)). Position 1122 (Glu-1122) interacts with Ca(2+). Residues 1149-1169 (ISIFFIIYIIIIAFFMMNIFV) traverse the membrane as a helical segment. Residues 1170–1226 (GFVIVTFQEQGEQEYKNCELDKNQRQCVEYALKARPLRRYIPKNPYQYKFWYVVNST) are Cytoplasmic-facing. Residues 1213–1496 (NPYQYKFWYV…LFVAVIMDNF (284 aa)) form an IV repeat. The helical transmembrane segment at 1227-1245 (GFEYIMFVLIMLNTLCLAM) threads the bilayer. Residues 1246–1260 (QHYGQSKLFNDAMDI) are Extracellular-facing. A helical transmembrane segment spans residues 1261 to 1280 (MNMVFTGVFTVEMVLKLIAF). At 1281–1297 (KPKIFVRKKERWLGYFS) the chain is on the cytoplasmic side. Residues 1298 to 1319 (DAWNTFDSLIVIGSIVDVVLSE) traverse the membrane as a helical segment. The Extracellular segment spans residues 1320–1342 (ADPKPTETVTTDESGNSEDSARI). The helical transmembrane segment at 1343–1362 (SITFFRLFRVMRLVKLLSRG) threads the bilayer. Topologically, residues 1363–1381 (EGIRTLLWTFIKSFQALPY) are cytoplasmic. The helical transmembrane segment at 1382-1401 (VALLIAMLFFIYAVIGMQVF) threads the bilayer. At 1402–1468 (GKVAMRDNNQ…GEEYTCGSNF (67 aa)) the chain is on the extracellular side. Residues 1449–1515 (RCDPESDYNP…LGPHHLDEFK (67 aa)) are dihydropyridine binding. Residues 1461–1504 (EYTCGSNFAIIYFISFYMLCAFLIINLFVAVIMDNFDYLTRDWS) form a phenylalkylamine binding region. A helical membrane pass occupies residues 1469 to 1493 (AIIYFISFYMLCAFLIINLFVAVIM). Residues 1494–2190 (DNFDYLTRDW…ADEMICITSL (697 aa)) lie on the Cytoplasmic side of the membrane. 4 disordered regions span residues 1736 to 1787 (THRP…NANL), 1803 to 1833 (FGSH…SRRT), 1917 to 1952 (HGFF…RSSF), and 1995 to 2025 (SSKA…HTPY). Residues 1805–1823 (SHEHRSENGYHSYSRADHE) show a composition bias toward basic and acidic residues. Positions 1824–1833 (KRRRPSSRRT) are enriched in basic residues.

Belongs to the calcium channel alpha-1 subunit (TC 1.A.1.11) family. CACNA1D subfamily. Voltage-dependent calcium channels are multisubunit complexes, consisting of alpha-1, alpha-2, beta and delta subunits in a 1:1:1:1 ratio. The channel activity is directed by the pore-forming and voltage-sensitive alpha-1 subunit. In many cases, this subunit is sufficient to generate voltage-sensitive calcium channel activity. The auxiliary subunits beta and alpha-2/delta linked by a disulfide bridge regulate the channel activity. Interacts with RIMBP2. As to expression, expressed in the basilar papilla of the cochlea.

It is found in the membrane. The catalysed reaction is Ca(2+)(in) = Ca(2+)(out). Its function is as follows. The isoform alpha-1D gives rise to L-type calcium currents. Long-lasting (L-type) calcium channels belong to the 'high-voltage activated' (HVA) group. The sequence is that of Voltage-dependent L-type calcium channel subunit alpha-1D (CACNA1D) from Gallus gallus (Chicken).